The sequence spans 149 residues: Large ribosomal subunit protein uL11 (149 aa).

The protein belongs to the universal ribosomal protein uL11 family. As to quaternary structure, part of the ribosomal stalk of the 50S ribosomal subunit. Interacts with L10 and the large rRNA to form the base of the stalk. L10 forms an elongated spine to which L12 dimers bind in a sequential fashion forming a multimeric L10(L12)X complex. Post-translationally, one or more lysine residues are methylated.

Forms part of the ribosomal stalk which helps the ribosome interact with GTP-bound translation factors. This Azorhizobium caulinodans (strain ATCC 43989 / DSM 5975 / JCM 20966 / LMG 6465 / NBRC 14845 / NCIMB 13405 / ORS 571) protein is Large ribosomal subunit protein uL11.